Reading from the N-terminus, the 224-residue chain is Orotate phosphoribosyltransferase (224 aa).

5-phospho-alpha-D-ribose 1-diphosphate is bound by residues Lys-26, 73–74 (YK), Arg-100, Lys-101, Lys-104, His-106, and 127–135 (EDVTTSGKS). The orotate site is built by Thr-131 and Arg-160.

The protein belongs to the purine/pyrimidine phosphoribosyltransferase family. PyrE subfamily. As to quaternary structure, homodimer. Mg(2+) is required as a cofactor.

It carries out the reaction orotidine 5'-phosphate + diphosphate = orotate + 5-phospho-alpha-D-ribose 1-diphosphate. It participates in pyrimidine metabolism; UMP biosynthesis via de novo pathway; UMP from orotate: step 1/2. In terms of biological role, catalyzes the transfer of a ribosyl phosphate group from 5-phosphoribose 1-diphosphate to orotate, leading to the formation of orotidine monophosphate (OMP). This Clostridium botulinum (strain Alaska E43 / Type E3) protein is Orotate phosphoribosyltransferase.